The primary structure comprises 886 residues: DNA mismatch repair protein MutS (886 aa).

Residue 641–648 (GPNMAGKS) coordinates ATP.

Belongs to the DNA mismatch repair MutS family.

In terms of biological role, this protein is involved in the repair of mismatches in DNA. It is possible that it carries out the mismatch recognition step. This protein has a weak ATPase activity. This is DNA mismatch repair protein MutS from Rickettsia akari (strain Hartford).